Consider the following 1199-residue polypeptide: Putative pyruvate-flavodoxin oxidoreductase (1199 aa).

2 4Fe-4S ferredoxin-type domains span residues Glu681–Tyr710 and Phe737–Leu766. Positions 690, 693, 696, 700, 746, 749, 752, 756, 820, 823, 848, and 1079 each coordinate [4Fe-4S] cluster.

It belongs to the pyruvate:ferredoxin/flavodoxin oxidoreductase family. Requires [4Fe-4S] cluster as cofactor.

The enzyme catalyses oxidized [flavodoxin] + pyruvate + CoA + 2 H(+) = reduced [flavodoxin] + acetyl-CoA + CO2. Functionally, oxidoreductase required for the transfer of electrons from pyruvate to flavodoxin. This is Putative pyruvate-flavodoxin oxidoreductase (nifJ) from Synechocystis sp. (strain ATCC 27184 / PCC 6803 / Kazusa).